Here is a 299-residue protein sequence, read N- to C-terminus: NAD-dependent protein deacetylase 1 (299 aa).

One can recognise a Deacetylase sirtuin-type domain in the interval 15 to 292 (LPPGTTDLAP…TTVADRLGLR (278 aa)). NAD(+)-binding positions include 39 to 59 (GAGI…GSLS) and 117 to 120 (QNVD). Histidine 135 serves as the catalytic Proton acceptor. Positions 143, 146, 194, and 197 each coordinate Zn(2+). NAD(+)-binding positions include 234–236 (GSS) and leucine 278.

This sequence belongs to the sirtuin family. Class II subfamily. The cofactor is Zn(2+).

The protein resides in the cytoplasm. The catalysed reaction is N(6)-acetyl-L-lysyl-[protein] + NAD(+) + H2O = 2''-O-acetyl-ADP-D-ribose + nicotinamide + L-lysyl-[protein]. Its function is as follows. NAD-dependent protein deacetylase which modulates the activities of several enzymes which are inactive in their acetylated form. The protein is NAD-dependent protein deacetylase 1 of Streptomyces coelicolor (strain ATCC BAA-471 / A3(2) / M145).